A 390-amino-acid chain; its full sequence is Protein-glutamate methylesterase/protein-glutamine glutaminase 1 (390 aa).

A Response regulatory domain is found at 4–121 (KVLVVDDSGF…SRNPQKVKQL (118 aa)). Asp-55 is modified (4-aspartylphosphate). A compositionally biased stretch (low complexity) spans 132–186 (SNRRSSGIGSASAASPAPAAPAPSTLSSRAPAPSAAAPARAVPSRTVAPAAAPAA). The tract at residues 132–201 (SNRRSSGIGS…PAHPTTTGTA (70 aa)) is disordered. The 193-residue stretch at 195–387 (PTTTGTAKRK…LDDIGRHLVE (193 aa)) folds into the CheB-type methylesterase domain. Catalysis depends on residues Ser-214, His-241, and Asp-334.

The protein belongs to the CheB family. In terms of processing, phosphorylated by CheA. Phosphorylation of the N-terminal regulatory domain activates the methylesterase activity.

Its subcellular location is the cytoplasm. It catalyses the reaction [protein]-L-glutamate 5-O-methyl ester + H2O = L-glutamyl-[protein] + methanol + H(+). The enzyme catalyses L-glutaminyl-[protein] + H2O = L-glutamyl-[protein] + NH4(+). Its function is as follows. Involved in chemotaxis. Part of a chemotaxis signal transduction system that modulates chemotaxis in response to various stimuli. Catalyzes the demethylation of specific methylglutamate residues introduced into the chemoreceptors (methyl-accepting chemotaxis proteins or MCP) by CheR. Also mediates the irreversible deamidation of specific glutamine residues to glutamic acid. The protein is Protein-glutamate methylesterase/protein-glutamine glutaminase 1 of Pseudomonas syringae pv. tomato (strain ATCC BAA-871 / DC3000).